We begin with the raw amino-acid sequence, 153 residues long: UPF0743 protein YCR087C-A (153 aa).

2 C2HC LYAR-type zinc fingers span residues 1 to 26 (MVTF…YRCP) and 27 to 52 (NAYY…TSCI). Positions 6, 9, 21, 25, 32, 35, 48, and 51 each coordinate Zn(2+). Positions 63 to 96 (YKGNKKQKQKQQQKQQQKQHQHQPVATPAKKVEK) are disordered. Residues 65–83 (GNKKQKQKQQQKQQQKQHQ) are compositionally biased toward basic residues.

It belongs to the UPF0743 family.

It localises to the nucleus. The protein localises to the nucleolus. The polypeptide is UPF0743 protein YCR087C-A (Saccharomyces cerevisiae (strain ATCC 204508 / S288c) (Baker's yeast)).